A 926-amino-acid chain; its full sequence is MLEDEYQLDFFKNNGFVRKQCQKCGTFFWTRDPERNTCGDAPCDPYSFIGSPVFSREFNISEMREYYLSFFEARGHTRINRYPVVARWRDDIYLTIASIADFQPFVTSGQVPPPANPLTISQPCIRLNDLDSVGRSGRHLTNFEMMAHHAFNRRDNEIYWKEHTLELCDELLNSLKVNPLAVTYKEEPWAGGGNAGPCVEVIVHGLELATLVFMDLKTDKKGDIEIKGETYSKMDNYIVDTGYGLERFVWASRGSPTIYDALFPGIVNELMGLAGIEHELNDSEYANILAQNARLAGFMDVSEKANLMELRKKVASSIGMTVDKLSAIMEPVEKVYAITDHTRCLTFMLGDGIIPSNVKAGYLARLVLRRTLRMMKDLDIRIPLSEIVDMHIKNMPEYPGFRENFPVIQDILESEEEKFNTTMERGRRIIQKSASHFKKTGEKIPLSQLTELYDSHGIPPEMAKEVAAEIGVGVEFPDNFYSIIGELHNKAEEKEEEVNPYAERLKHLPKTKRRFYDEPTRLEFEAVVLDVFDNHVVLDNTFFYAEGGGQPADIGTIVAEDTVYRVVDVQVYEGVILHTIENPGKELAITKGELITGKVDEKRRMTLARHHTATHIVNDAARKVLGKHIWQAGAQKFEDHSRLDLSHYKHISPEEIRQIELLANRTVMENKRVVTEWMPRTEAEQVYGFGLYQGGVPPGEKIRIVKVGDDVEACGGTHCTSTGIIGPIKILKTERIQDGVERIEFAAGTAAVRAMQKLESLLVDSSKTLSVPPEHLPVSVDRFFGEWKDLKKENERLKEELARSRVYRMLGDASEVSGLKVITEQVSGADSLELQKIATELLKTENVVALLASDFEGVKIVASAGEKAMKCGVNAGNLVREMSKIVGGGGGGKPALAMGGGTDPTRIQDALTRGLELVKTAACKEA.

Zn(2+) is bound by residues His-611, His-615, Cys-714, and His-718.

Belongs to the class-II aminoacyl-tRNA synthetase family. The cofactor is Zn(2+).

It is found in the cytoplasm. The enzyme catalyses tRNA(Ala) + L-alanine + ATP = L-alanyl-tRNA(Ala) + AMP + diphosphate. Its function is as follows. Catalyzes the attachment of alanine to tRNA(Ala) in a two-step reaction: alanine is first activated by ATP to form Ala-AMP and then transferred to the acceptor end of tRNA(Ala). Also edits incorrectly charged Ser-tRNA(Ala) and Gly-tRNA(Ala) via its editing domain. This Methanosarcina mazei (strain ATCC BAA-159 / DSM 3647 / Goe1 / Go1 / JCM 11833 / OCM 88) (Methanosarcina frisia) protein is Alanine--tRNA ligase.